The following is a 246-amino-acid chain: Pyridoxine 5'-phosphate synthase (246 aa).

Asn-12 contacts 3-amino-2-oxopropyl phosphate. 14–15 (DH) serves as a coordination point for 1-deoxy-D-xylulose 5-phosphate. Arg-23 contacts 3-amino-2-oxopropyl phosphate. His-48 serves as the catalytic Proton acceptor. Arg-50 and His-55 together coordinate 1-deoxy-D-xylulose 5-phosphate. The active-site Proton acceptor is the Glu-75. Thr-105 contacts 1-deoxy-D-xylulose 5-phosphate. His-196 serves as the catalytic Proton donor. Residues Gly-197 and 218–219 (GH) each bind 3-amino-2-oxopropyl phosphate.

The protein belongs to the PNP synthase family. In terms of assembly, homooctamer; tetramer of dimers.

It localises to the cytoplasm. The catalysed reaction is 3-amino-2-oxopropyl phosphate + 1-deoxy-D-xylulose 5-phosphate = pyridoxine 5'-phosphate + phosphate + 2 H2O + H(+). It participates in cofactor biosynthesis; pyridoxine 5'-phosphate biosynthesis; pyridoxine 5'-phosphate from D-erythrose 4-phosphate: step 5/5. Functionally, catalyzes the complicated ring closure reaction between the two acyclic compounds 1-deoxy-D-xylulose-5-phosphate (DXP) and 3-amino-2-oxopropyl phosphate (1-amino-acetone-3-phosphate or AAP) to form pyridoxine 5'-phosphate (PNP) and inorganic phosphate. This is Pyridoxine 5'-phosphate synthase from Thioalkalivibrio sulfidiphilus (strain HL-EbGR7).